The sequence spans 269 residues: MTLKIGIVGAGGRMGRNLITAVQNAEGVELGAAFERKGSSLVGADAGEVAGIGATGVKISDDLNQNTNFDVLIDFTRPEGTLEHIKFCVANGKKMVIGTTGFDDAGKQAIQTAAEQISIVFASNYSVGVNLVFKLLEKAAKVMGDYCDIEVIEAHHRHKVDAPSGTALSMGEHIAKTLGRDLKTHGVFAREGITGERKRDEIGFATIRAGDVVGEHSVWFADEGERVEIAHKASSRMTFANGAVRAAKWLNTKQNGLFDMTDVLDLNNL.

NAD(+)-binding positions include 9 to 14 (GAGGRM) and Glu35. Arg36 provides a ligand contact to NADP(+). Residues 98-100 (GTT) and 122-125 (ASNY) contribute to the NAD(+) site. His155 acts as the Proton donor/acceptor in catalysis. His156 provides a ligand contact to (S)-2,3,4,5-tetrahydrodipicolinate. Lys159 functions as the Proton donor in the catalytic mechanism. 165–166 (GT) contacts (S)-2,3,4,5-tetrahydrodipicolinate.

It belongs to the DapB family.

It localises to the cytoplasm. It catalyses the reaction (S)-2,3,4,5-tetrahydrodipicolinate + NAD(+) + H2O = (2S,4S)-4-hydroxy-2,3,4,5-tetrahydrodipicolinate + NADH + H(+). The enzyme catalyses (S)-2,3,4,5-tetrahydrodipicolinate + NADP(+) + H2O = (2S,4S)-4-hydroxy-2,3,4,5-tetrahydrodipicolinate + NADPH + H(+). Its pathway is amino-acid biosynthesis; L-lysine biosynthesis via DAP pathway; (S)-tetrahydrodipicolinate from L-aspartate: step 4/4. Catalyzes the conversion of 4-hydroxy-tetrahydrodipicolinate (HTPA) to tetrahydrodipicolinate. This chain is 4-hydroxy-tetrahydrodipicolinate reductase, found in Actinobacillus pleuropneumoniae serotype 7 (strain AP76).